The following is a 370-amino-acid chain: F-box protein At1g66490 (370 aa).

Residues M1 to T46 form the F-box domain.

The protein is F-box protein At1g66490 of Arabidopsis thaliana (Mouse-ear cress).